Here is a 464-residue protein sequence, read N- to C-terminus: Trigger factor (464 aa).

The PPIase FKBP-type domain maps to 162 to 243; it reads GDFISIDLSA…VGTVKERELP (82 aa). The interval 428–464 is disordered; the sequence is GASVDTAELFGNGEADTEEAASTDEVASDSAEGEDQK.

Belongs to the FKBP-type PPIase family. Tig subfamily.

The protein localises to the cytoplasm. It carries out the reaction [protein]-peptidylproline (omega=180) = [protein]-peptidylproline (omega=0). In terms of biological role, involved in protein export. Acts as a chaperone by maintaining the newly synthesized protein in an open conformation. Functions as a peptidyl-prolyl cis-trans isomerase. This is Trigger factor from Rhodococcus opacus (strain B4).